A 601-amino-acid chain; its full sequence is N-acetyltransferase ESCO2 (601 aa).

Phosphoserine occurs at positions 29, 75, 223, and 244. A disordered region spans residues 222-243; sequence SSLENEPSLGRTQKSKSEVIED. Basic and acidic residues predominate over residues 282 to 305; the sequence is KEKLIKDSSDDRVSSKEHKVDKNE. The interval 282 to 315 is disordered; sequence KEKLIKDSSDDRVSSKEHKVDKNEAFSSEDSLGE. Residues 306–315 show a composition bias toward polar residues; that stretch reads AFSSEDSLGE. Position 312 is a phosphoserine (Ser-312). The CCHH-type zinc finger occupies 387 to 411; sequence TVCKSCGMIYTASNPEDEMQHVQHH. Position 512 is a phosphoserine (Ser-512).

This sequence belongs to the acetyltransferase family. ECO subfamily. Widely expressed in fetal tissues. In adult, it is expressed in thymus, placenta and small intestine.

The protein resides in the nucleus. It localises to the chromosome. The catalysed reaction is L-lysyl-[protein] + acetyl-CoA = N(6)-acetyl-L-lysyl-[protein] + CoA + H(+). In terms of biological role, acetyltransferase required for the establishment of sister chromatid cohesion. Couples the processes of cohesion and DNA replication to ensure that only sister chromatids become paired together. In contrast to the structural cohesins, the deposition and establishment factors are required only during the S phase. Acetylates the cohesin component SMC3. The sequence is that of N-acetyltransferase ESCO2 from Homo sapiens (Human).